A 156-amino-acid polypeptide reads, in one-letter code: Small ribosomal subunit protein uS7 (156 aa).

It belongs to the universal ribosomal protein uS7 family. In terms of assembly, part of the 30S ribosomal subunit. Contacts proteins S9 and S11.

In terms of biological role, one of the primary rRNA binding proteins, it binds directly to 16S rRNA where it nucleates assembly of the head domain of the 30S subunit. Is located at the subunit interface close to the decoding center, probably blocks exit of the E-site tRNA. The protein is Small ribosomal subunit protein uS7 of Mycobacterium tuberculosis (strain CDC 1551 / Oshkosh).